A 255-amino-acid chain; its full sequence is UPF0246 protein DP0358 (255 aa).

It belongs to the UPF0246 family.

The chain is UPF0246 protein DP0358 from Desulfotalea psychrophila (strain LSv54 / DSM 12343).